The sequence spans 129 residues: ATP synthase epsilon chain (129 aa).

This sequence belongs to the ATPase epsilon chain family. As to quaternary structure, F-type ATPases have 2 components, CF(1) - the catalytic core - and CF(0) - the membrane proton channel. CF(1) has five subunits: alpha(3), beta(3), gamma(1), delta(1), epsilon(1). CF(0) has three main subunits: a, b and c.

Its subcellular location is the cell inner membrane. Its function is as follows. Produces ATP from ADP in the presence of a proton gradient across the membrane. The sequence is that of ATP synthase epsilon chain from Campylobacter concisus (strain 13826).